The sequence spans 65 residues: DNA-directed RNA polymerase subunit Rpo10 (65 aa).

Cysteine 7, cysteine 10, cysteine 44, and cysteine 45 together coordinate Zn(2+).

Belongs to the archaeal Rpo10/eukaryotic RPB10 RNA polymerase subunit family. In terms of assembly, part of the RNA polymerase complex. Zn(2+) is required as a cofactor.

It localises to the cytoplasm. The protein localises to the chromosome. It carries out the reaction RNA(n) + a ribonucleoside 5'-triphosphate = RNA(n+1) + diphosphate. Its function is as follows. DNA-dependent RNA polymerase (RNAP) catalyzes the transcription of DNA into RNA using the four ribonucleoside triphosphates as substrates. This is DNA-directed RNA polymerase subunit Rpo10 from Thermococcus kodakarensis (strain ATCC BAA-918 / JCM 12380 / KOD1) (Pyrococcus kodakaraensis (strain KOD1)).